A 574-amino-acid chain; its full sequence is Polyamine aminopropyltransferase (574 aa).

7 consecutive transmembrane segments (helical) span residues 22-42 (VLLLGIMAVLAGCGLIYEYLL), 55-75 (AAIYTMIGLMIVSMGLGAFAA), 90-110 (LTVALCGSLAILITAAVIGFG), 144-164 (LPYFWGVLLGLMIGMEIPLIA), 188-208 (IGAGIGAAIWVGFMLAIDIQL), 209-229 (AAALTASFNLLAGFVFIWRFW), and 237-257 (LLLAAHLVVTGVLLLLAIQGP). The spermidine synthase stretch occupies residues 254–510 (IQGPSWEQQF…ATLDGKDAQH (257 aa)). A PABS domain is found at 257 to 505 (PSWEQQFNNL…WGWSIATLDG (249 aa)). An S-methyl-5'-thioadenosine-binding site is contributed by Q281. The spermidine site is built by H317 and D341. S-methyl-5'-thioadenosine is bound by residues D360 and 403–404 (DA). The active-site Proton acceptor is the D424.

Belongs to the spermidine/spermine synthase family. In terms of assembly, homodimer or homotetramer.

The protein localises to the cell membrane. It carries out the reaction S-adenosyl 3-(methylsulfanyl)propylamine + putrescine = S-methyl-5'-thioadenosine + spermidine + H(+). It participates in amine and polyamine biosynthesis; spermidine biosynthesis; spermidine from putrescine: step 1/1. Functionally, catalyzes the irreversible transfer of a propylamine group from the amino donor S-adenosylmethioninamine (decarboxy-AdoMet) to putrescine (1,4-diaminobutane) to yield spermidine. The polypeptide is Polyamine aminopropyltransferase (Shewanella oneidensis (strain ATCC 700550 / JCM 31522 / CIP 106686 / LMG 19005 / NCIMB 14063 / MR-1)).